We begin with the raw amino-acid sequence, 583 residues long: RuBisCO large subunit-binding protein subunit alpha, chloroplastic (583 aa).

Polar residues predominate over residues 1–14 (MATANALSSPSVLC). The disordered stretch occupies residues 1 to 35 (MATANALSSPSVLCSSRQGKLSGGSQQKGQRVSYR). The transit peptide at 1-45 (MATANALSSPSVLCSSRQGKLSGGSQQKGQRVSYRKANRRFSLRA) directs the protein to the chloroplast. The span at 15–31 (SSRQGKLSGGSQQKGQR) shows a compositional bias: low complexity. S89 carries the phosphoserine modification.

Belongs to the chaperonin (HSP60) family. Oligomer of probably six alpha and six beta subunits.

It is found in the plastid. The protein resides in the chloroplast. Functionally, this protein binds RuBisCO small and large subunits and is implicated in the assembly of the enzyme oligomer. This is RuBisCO large subunit-binding protein subunit alpha, chloroplastic from Brassica napus (Rape).